The primary structure comprises 264 residues: Apolipoprotein A-I (264 aa).

An N-terminal signal peptide occupies residues 1–18 (MKAVVLAVALVFLTGSQA). Tandem repeats lie at residues 67–88 (LNLL…ERLG) and 89–110 (PLTR…QEMN). The 10 X approximate tandem repeats stretch occupies residues 67-264 (LNLLENWDTL…DKARETLTAQ (198 aa)). Methionine 109 carries the post-translational modification Methionine sulfoxide. The 3; half-length repeat unit spans residues 111-121 (KDLEEVKQNVQ). Repeat copies occupy residues 122–143 (PYLD…QRVA), 144–165 (PLGA…GKLS), and 166–187 (PVAE…TQLA). A 7; truncated repeat occupies 188 to 207 (PHSDKLRESLAQRLAELKSN). Residues 208-229 (PTLNEYHTRAKTHLNTFGEKAR) form repeat 8. One copy of the 9; half-length repeat lies at 230–240 (PALEDLRHTLI). Residues 241 to 264 (PILDTLKTKVKSVIDKARETLTAQ) form repeat 10.

Belongs to the apolipoprotein A1/A4/E family. As to quaternary structure, homodimer. Interacts with APOA1BP and CLU. Component of a sperm activating protein complex (SPAP), consisting of APOA1, an immunoglobulin heavy chain, an immunoglobulin light chain and albumin. Interacts with NDRG1. Interacts with SCGB3A2. Interacts with NAXE and YJEFN3. In terms of processing, glycosylated. Palmitoylated. Post-translationally, phosphorylation sites are present in the extracellular medium.

The protein resides in the secreted. Participates in the reverse transport of cholesterol from tissues to the liver for excretion by promoting cholesterol efflux from tissues and by acting as a cofactor for the lecithin cholesterol acyltransferase (LCAT). As part of the SPAP complex, activates spermatozoa motility. The protein is Apolipoprotein A-I (Apoa1) of Mus pahari (Gairdner's shrew-mouse).